We begin with the raw amino-acid sequence, 653 residues long: Probable potassium transport system protein Kup (653 aa).

A run of 12 helical transmembrane segments spans residues 37 to 57 (ALLA…SPLY), 79 to 99 (VLSL…LLLV), 134 to 154 (ITLG…TPAI), 168 to 188 (AVFD…LFLV), 196 to 216 (IGAV…GLGV), 243 to 263 (LHGF…EALY), 278 to 298 (WFSM…ALLL), 320 to 340 (LVAL…AGVF), 368 to 388 (IYLP…VLGF), 397 to 417 (AYGI…YVVA), 426 to 446 (WVAI…FGAN), and 450 to 470 (VADG…LMTT).

This sequence belongs to the HAK/KUP transporter (TC 2.A.72) family.

The protein resides in the cell inner membrane. It carries out the reaction K(+)(in) + H(+)(in) = K(+)(out) + H(+)(out). Its function is as follows. Transport of potassium into the cell. Likely operates as a K(+):H(+) symporter. The polypeptide is Probable potassium transport system protein Kup (Myxococcus xanthus (strain DK1622)).